The primary structure comprises 297 residues: Small ribosomal subunit protein uS2 (297 aa).

The segment covering alanine 263–glutamate 289 has biased composition (low complexity). The segment at alanine 263–tryptophan 297 is disordered.

It belongs to the universal ribosomal protein uS2 family. In terms of assembly, component of the small ribosomal subunit. Mature ribosomes consist of a small (40S) and a large (60S) subunit. The 40S subunit contains about 33 different proteins and 1 molecule of RNA (18S). The 60S subunit contains about 49 different proteins and 3 molecules of RNA (25S, 5.8S and 5S). Interacts with rps21.

It localises to the cytoplasm. Functionally, required for the assembly and/or stability of the 40S ribosomal subunit. Required for the processing of the 20S rRNA-precursor to mature 18S rRNA in a late step of the maturation of 40S ribosomal subunits. The polypeptide is Small ribosomal subunit protein uS2 (rps0) (Neosartorya fischeri (strain ATCC 1020 / DSM 3700 / CBS 544.65 / FGSC A1164 / JCM 1740 / NRRL 181 / WB 181) (Aspergillus fischerianus)).